Reading from the N-terminus, the 737-residue chain is Glycogen [starch] synthase, muscle (737 aa).

Ser-8 is subject to Phosphoserine; by AMPK and PKA. Phosphoserine is present on Ser-11. Lys-39 serves as a coordination point for UDP. His-205 and Arg-211 together coordinate UDP-alpha-D-glucose. Residues His-291, Glu-292, Gln-294, His-297, and Lys-301 each contribute to the alpha-D-glucose 6-phosphate site. Arg-331 is a UDP binding site. Arg-331 contacts UDP-alpha-D-glucose. Ser-412 is subject to Phosphoserine. His-501 serves as a coordination point for alpha-D-glucose 6-phosphate. UDP-alpha-D-glucose-binding residues include Glu-510, Trp-512, and Gly-513. Thr-515 lines the UDP pocket. Alpha-D-glucose 6-phosphate-binding residues include Arg-582 and Arg-586. The tract at residues 634–737 (YRYPRPASVP…PTSSLGEERN (104 aa)) is disordered. The residue at position 641 (Ser-641) is a Phosphoserine; by DYRK2, GSK3-alpha, GSK3-beta and PASK. Phosphoserine; by GSK3-alpha and GSK3-beta is present on residues Ser-645 and Ser-649. At Ser-652 the chain carries Phosphoserine. A Phosphoserine; by GSK3-alpha and GSK3-beta modification is found at Ser-653. Ser-657 carries the phosphoserine; by CK2 modification. Residues 658–681 (EDEEDPRNGPLEEDSERYDEDEEA) show a composition bias toward acidic residues. Ser-672 carries the phosphoserine modification. Residues 682-695 (AKDRRNIRAPEWPR) show a composition bias toward basic and acidic residues. Ser-698 bears the Phosphoserine mark. Residues 698–714 (SCTSSTSGSKRNSVDTA) show a composition bias toward polar residues. Thr-700 carries the post-translational modification Phosphothreonine. The residue at position 710 (Ser-710) is a Phosphoserine. Residues 715 to 737 (TSSSLSTPSEPLSPTSSLGEERN) show a composition bias toward low complexity. Residue Thr-721 is modified to Phosphothreonine. Phosphoserine is present on residues Ser-727 and Ser-731.

Belongs to the glycosyltransferase 3 family. As to quaternary structure, part of the GYS1-GYG1 complex, a heterooctamer composed of a tetramer of GYS1 and 2 dimers of GYG1, where each GYS1 protomer binds to one GYG1 subunit (via GYG1 C-terminus); the GYS1 tetramer may dissociate from GYG1 dimers to continue glycogen polymerization on its own. Phosphorylation at Ser-8 by AMPK inactivates the enzyme activity. Primed phosphorylation at Ser-657 (site 5) by CSNK2A1 and CSNK2A2 is required for inhibitory phosphorylation at Ser-641 (site 3a), Ser-645 (site 3b), Ser-649 (site 3c) and Ser-653 (site 4) by GSK3A an GSK3B. Phosphorylated at Ser-641 by PASK, leading to inactivation; phosphorylation by PASK is inhibited by glycogen. Phosphorylated at Ser-641 by DYRK2, leading to inactivation. Dephosphorylation at Ser-641 and Ser-645 by PP1 activates the enzyme.

The catalysed reaction is [(1-&gt;4)-alpha-D-glucosyl](n) + UDP-alpha-D-glucose = [(1-&gt;4)-alpha-D-glucosyl](n+1) + UDP + H(+). It participates in glycan biosynthesis; glycogen biosynthesis. With respect to regulation, allosteric activation by glucose-6-phosphate. Phosphorylation reduces the activity towards UDP-glucose. When in the non-phosphorylated state, glycogen synthase does not require glucose-6-phosphate as an allosteric activator; when phosphorylated it does. Glycogen synthase participates in the glycogen biosynthetic process along with glycogenin and glycogen branching enzyme. Extends the primer composed of a few glucose units formed by glycogenin by adding new glucose units to it. In this context, glycogen synthase transfers the glycosyl residue from UDP-Glc to the non-reducing end of alpha-1,4-glucan. The sequence is that of Glycogen [starch] synthase, muscle (GYS1) from Macaca mulatta (Rhesus macaque).